A 396-amino-acid polypeptide reads, in one-letter code: Putative transposase y4rJ (396 aa).

The protein belongs to the transposase 20 family.

This Sinorhizobium fredii (strain NBRC 101917 / NGR234) protein is Putative transposase y4rJ.